The following is a 97-amino-acid chain: Co-chaperonin GroES (97 aa).

The protein belongs to the GroES chaperonin family. Heptamer of 7 subunits arranged in a ring. Interacts with the chaperonin GroEL.

Its subcellular location is the cytoplasm. In terms of biological role, together with the chaperonin GroEL, plays an essential role in assisting protein folding. The GroEL-GroES system forms a nano-cage that allows encapsulation of the non-native substrate proteins and provides a physical environment optimized to promote and accelerate protein folding. GroES binds to the apical surface of the GroEL ring, thereby capping the opening of the GroEL channel. This is Co-chaperonin GroES from Pseudomonas putida (Arthrobacter siderocapsulatus).